The chain runs to 259 residues: UPF0246 protein SG0407 (259 aa).

This sequence belongs to the UPF0246 family.

This chain is UPF0246 protein SG0407, found in Sodalis glossinidius (strain morsitans).